We begin with the raw amino-acid sequence, 287 residues long: Proteasome assembly chaperone 1 (287 aa).

A disordered region spans residues 1–32 (MATFFGEVQSVFSRAVDEDDEEEEGEEEEEDR). Positions 17–32 (DEDDEEEEGEEEEEDR) are enriched in acidic residues.

It belongs to the PSMG1 family. In terms of assembly, forms a heterodimer with psmg2. Post-translationally, degraded by the proteasome upon completion of 20S proteasome maturation.

The protein resides in the cytoplasm. Its subcellular location is the endoplasmic reticulum. Functionally, chaperone protein which promotes assembly of the 20S proteasome as part of a heterodimer with psmg2. In Xenopus tropicalis (Western clawed frog), this protein is Proteasome assembly chaperone 1.